A 120-amino-acid polypeptide reads, in one-letter code: Large ribosomal subunit protein uL18 (120 aa).

This sequence belongs to the universal ribosomal protein uL18 family. Part of the 50S ribosomal subunit; part of the 5S rRNA/L5/L18/L25 subcomplex. Contacts the 5S and 23S rRNAs.

This is one of the proteins that bind and probably mediate the attachment of the 5S RNA into the large ribosomal subunit, where it forms part of the central protuberance. This Chloroflexus aggregans (strain MD-66 / DSM 9485) protein is Large ribosomal subunit protein uL18.